The following is a 147-amino-acid chain: Large ribosomal subunit protein uL11 (147 aa).

This sequence belongs to the universal ribosomal protein uL11 family. In terms of assembly, part of the ribosomal stalk of the 50S ribosomal subunit. Interacts with L10 and the large rRNA to form the base of the stalk. L10 forms an elongated spine to which L12 dimers bind in a sequential fashion forming a multimeric L10(L12)X complex. Post-translationally, one or more lysine residues are methylated.

Functionally, forms part of the ribosomal stalk which helps the ribosome interact with GTP-bound translation factors. In Corynebacterium aurimucosum (strain ATCC 700975 / DSM 44827 / CIP 107346 / CN-1) (Corynebacterium nigricans), this protein is Large ribosomal subunit protein uL11.